The primary structure comprises 374 residues: uncharacterized protein (374 aa).

29–36 lines the ATP pocket; sequence GSLNSGKS.

The protein belongs to the archaeal ATPase family.

This is an uncharacterized protein from Methanocaldococcus jannaschii (strain ATCC 43067 / DSM 2661 / JAL-1 / JCM 10045 / NBRC 100440) (Methanococcus jannaschii).